Consider the following 362-residue polypeptide: MSSSSSMDLLMCLLLLISPVVLAKSSSTVPAIFTFGDSIFDAGNNHYNKNCTAQADFPPYGSSFFHRPTGRFTNGRTVADFISEFVGLPLQKPFLELQIQILNGTSNFSNGINFASAGSGLLLDTNKFMGVTPIQTQLQQFQTLVEQNLIEKSIIQESLFLLETGSNDIFNYFLPFRAPTLSPDAYVNAMLDQVNKTIDQIYKLGARRIAFFSLGPVGCVPARAMLPNAPTNKCFGKMNVMAKMYNKRLEDIVNIIPTKYPGAIAVFGAVYGITHRFQTYPARYGFSDVSNACCGNGTLGGLMQCGREGYKICNNPNEFLFWDFYHPTEHTYRLMSKALWNGNKNHIRPFNLMALATNKITF.

A signal peptide spans 1–23 (MSSSSSMDLLMCLLLLISPVVLA). Catalysis depends on Ser-38, which acts as the Nucleophile. N-linked (GlcNAc...) asparagine glycans are attached at residues Asn-50, Asn-103, Asn-107, Asn-195, and Asn-296. Active-site residues include Asp-323 and His-326.

The protein belongs to the 'GDSL' lipolytic enzyme family.

The protein localises to the secreted. The protein is GDSL esterase/lipase 6 (GLIP6) of Arabidopsis thaliana (Mouse-ear cress).